The following is a 580-amino-acid chain: Glypican-3 (580 aa).

The N-terminal stretch at 1 to 24 (MAGTVRTACLVVAMLLSLDFPGQA) is a signal peptide. Residue Q25 is modified to Pyrrolidone carboxylic acid. Disulfide bonds link C35-C72, C65-C262, C73-C265, C197-C349, C252-C285, C274-C422, and C278-C410. 2 N-linked (GlcNAc...) asparagine glycosylation sites follow: N124 and N241. A Phosphoserine; by FAM20C modification is found at S352. N-linked (GlcNAc...) asparagine glycosylation occurs at N418. 2 O-linked (Xyl...) (glycosaminoglycan) serine glycosylation sites follow: S495 and S509. Residue N554 is the site of GPI-anchor amidated asparagine attachment. Residues 555-580 (LGNVHSPLKLLTSMAISVVCFFFLVH) constitute a propeptide, removed in mature form.

Belongs to the glypican family. As to quaternary structure, heterodimer; disulfide-linked. Cleavage by a furin-like convertase results in production of alpha and beta chains which form a disulfide-linked heterodimer. Interacts with DPP4. Interacts with FGF2. Interacts with WNT5A. Also interacts with WNT3A and WNT7B. Interacts with hedgehog protein SHH; the heparan sulfate chains are not required for the interaction. Also interacts with hedgehog protein IHH. Interacts with CD81. Interacts with Wnt receptors FZD4, FZD7 and FZD8; the heparan sulfate chains are required for the interaction. O-glycosylated; contains heparan sulfate and/or chondroitin sulfate. Post-translationally, cleaved intracellularly by a furin-like convertase to generate 2 subunits, alpha and beta, which remain associated through disulfide bonds and are associated with the cell surface via the GPI-anchor. This processing is essential for its role in inhibition of hedgehog signaling. A second proteolytic event may result in cleavage of the protein on the cell surface, separating it from the GPI-anchor and leading to its shedding from the cell surface. Detected in placenta (at protein level). Highly expressed in lung, liver and kidney.

The protein resides in the cell membrane. In terms of biological role, cell surface proteoglycan. Negatively regulates the hedgehog signaling pathway when attached via the GPI-anchor to the cell surface by competing with the hedgehog receptor PTC1 for binding to hedgehog proteins. Binding to the hedgehog protein SHH triggers internalization of the complex by endocytosis and its subsequent lysosomal degradation. Positively regulates the canonical Wnt signaling pathway by binding to the Wnt receptor Frizzled and stimulating the binding of the Frizzled receptor to Wnt ligands. Positively regulates the non-canonical Wnt signaling pathway. Binds to CD81 which decreases the availability of free CD81 for binding to the transcriptional repressor HHEX, resulting in nuclear translocation of HHEX and transcriptional repression. Inhibits the dipeptidyl peptidase activity of DPP4. Plays a role in limb patterning and skeletal development by controlling the cellular response to BMP4. Modulates the effects of growth factors BMP2, BMP7 and FGF7 on renal branching morphogenesis. Required for coronary vascular development. Plays a role in regulating cell movements during gastrulation. The polypeptide is Glypican-3 (GPC3) (Homo sapiens (Human)).